The chain runs to 521 residues: 2-isopropylmalate synthase (521 aa).

In terms of domain architecture, Pyruvate carboxyltransferase spans 12-274; sequence VIIFDTTLRD…WNKIDTTMLT (263 aa). Residues D21, H209, H211, and N245 each coordinate Mn(2+). The tract at residues 398–521 is regulatory domain; that stretch reads KLLSLTVIAG…DLPVPEAAAS (124 aa).

Belongs to the alpha-IPM synthase/homocitrate synthase family. LeuA type 1 subfamily. Homodimer. The cofactor is Mn(2+).

Its subcellular location is the cytoplasm. The catalysed reaction is 3-methyl-2-oxobutanoate + acetyl-CoA + H2O = (2S)-2-isopropylmalate + CoA + H(+). It functions in the pathway amino-acid biosynthesis; L-leucine biosynthesis; L-leucine from 3-methyl-2-oxobutanoate: step 1/4. Functionally, catalyzes the condensation of the acetyl group of acetyl-CoA with 3-methyl-2-oxobutanoate (2-ketoisovalerate) to form 3-carboxy-3-hydroxy-4-methylpentanoate (2-isopropylmalate). This chain is 2-isopropylmalate synthase, found in Rhodopseudomonas palustris (strain BisB18).